A 605-amino-acid polypeptide reads, in one-letter code: Capsid scaffolding protein (605 aa).

Residues His-48, Ser-116, and His-139 each act as charge relay system in the active site. The tract at residues 235–275 is disordered; it reads ASDAPDLQKPDKALQSPPPASTDPDTMLSGNAGEGATACGG. Residues 281 to 300 are interaction with pAP; it reads QDLISVPRNTFMTLLQTNLD. Disordered stretches follow at residues 403–432 and 489–588; these read DYVP…PGED and PHQS…KSVS. The short motif at 410–416 is the Nuclear localization signal element; it reads RSNKRKR. Over residues 568-579 the composition is skewed to polar residues; the sequence is ASASGVAQSKEP. The tract at residues 585–605 is interaction with major capsid protein; the sequence is KSVSAHLKSIFCEELLNKRVA.

This sequence belongs to the herpesviridae capsid scaffolding protein family. In terms of assembly, homomultimer. Interacts with major capsid protein. As to quaternary structure, exists in a monomer-dimer equilibrium with the dimer being the active species. In terms of processing, capsid scaffolding protein is cleaved by assemblin after formation of the spherical procapsid. As a result, the capsid obtains its mature, icosahedral shape. Cleavages occur at two or more sites: release (R-site) and maturation (M-site).

Its subcellular location is the host cytoplasm. It localises to the host nucleus. The catalysed reaction is Cleaves -Ala-|-Ser- and -Ala-|-Ala- bonds in the scaffold protein.. Acts as a scaffold protein by binding major capsid protein in the cytoplasm, inducing the nuclear localization of both proteins. Multimerizes in the nucleus such as major capsid protein forms the icosahedral T=16 capsid. Autocatalytic cleavage releases the assembly protein, and subsequently abolishes interaction with major capsid protein. Cleavages products are evicted from the capsid before or during DNA packaging. Functionally, protease that plays an essential role in virion assembly within the nucleus. Catalyzes the cleavage of the assembly protein after formation of the spherical procapsid. By that cleavage, the capsid matures and gains its icosahedral shape. The cleavage sites seem to include -Ala-Ser-, -Ala-Ala-, as well as Ala-Thr bonds. Assemblin and cleavages products are evicted from the capsid before or during DNA packaging. In terms of biological role, plays a major role in capsid assembly. Acts as a scaffold protein by binding major capsid protein. Multimerizes in the nucleus such as major capsid protein forms the icosahedral T=16 capsid. Cleaved by assemblin after capsid completion. The cleavages products are evicted from the capsid before or during DNA packaging. The sequence is that of Capsid scaffolding protein from Epstein-Barr virus (strain AG876) (HHV-4).